Consider the following 246-residue polypeptide: UDP-N-acetyl-D-mannosaminuronic acid transferase (246 aa).

The protein belongs to the glycosyltransferase 26 family.

The catalysed reaction is UDP-N-acetyl-alpha-D-mannosaminouronate + N-acetyl-alpha-D-glucosaminyl-di-trans,octa-cis-undecaprenyl diphosphate = beta-D-ManNAcA-(1-&gt;4)-alpha-D-GlcNAc-di-trans,octa-cis-undecaprenyl diphosphate + UDP + H(+). The protein operates within bacterial outer membrane biogenesis; enterobacterial common antigen biosynthesis. Functionally, catalyzes the synthesis of Und-PP-GlcNAc-ManNAcA (Lipid II), the second lipid-linked intermediate involved in enterobacterial common antigen (ECA) synthesis. This is UDP-N-acetyl-D-mannosaminuronic acid transferase from Escherichia fergusonii (strain ATCC 35469 / DSM 13698 / CCUG 18766 / IAM 14443 / JCM 21226 / LMG 7866 / NBRC 102419 / NCTC 12128 / CDC 0568-73).